A 128-amino-acid polypeptide reads, in one-letter code: Large ribosomal subunit protein bL12 (128 aa).

This sequence belongs to the bacterial ribosomal protein bL12 family. Homodimer. Part of the ribosomal stalk of the 50S ribosomal subunit. Forms a multimeric L10(L12)X complex, where L10 forms an elongated spine to which 2 to 4 L12 dimers bind in a sequential fashion. Binds GTP-bound translation factors.

Forms part of the ribosomal stalk which helps the ribosome interact with GTP-bound translation factors. Is thus essential for accurate translation. The sequence is that of Large ribosomal subunit protein bL12 from Halorhodospira halophila (strain DSM 244 / SL1) (Ectothiorhodospira halophila (strain DSM 244 / SL1)).